We begin with the raw amino-acid sequence, 157 residues long: SsrA-binding protein (157 aa).

The protein belongs to the SmpB family.

The protein resides in the cytoplasm. Its function is as follows. Required for rescue of stalled ribosomes mediated by trans-translation. Binds to transfer-messenger RNA (tmRNA), required for stable association of tmRNA with ribosomes. tmRNA and SmpB together mimic tRNA shape, replacing the anticodon stem-loop with SmpB. tmRNA is encoded by the ssrA gene; the 2 termini fold to resemble tRNA(Ala) and it encodes a 'tag peptide', a short internal open reading frame. During trans-translation Ala-aminoacylated tmRNA acts like a tRNA, entering the A-site of stalled ribosomes, displacing the stalled mRNA. The ribosome then switches to translate the ORF on the tmRNA; the nascent peptide is terminated with the 'tag peptide' encoded by the tmRNA and targeted for degradation. The ribosome is freed to recommence translation, which seems to be the essential function of trans-translation. In Methylobacterium nodulans (strain LMG 21967 / CNCM I-2342 / ORS 2060), this protein is SsrA-binding protein.